Here is a 539-residue protein sequence, read N- to C-terminus: E3 ubiquitin-protein ligase arc-1 (539 aa).

An RING-type zinc finger spans residues 6–53 (CNVCNEEYSARDPLKCPRVLTGCGHTICHNCAISIAGRNSSIFCPFDR). Residues 103–149 (LLNLECDEDSEHVAVIYCTVCDSNLCERCSESTHSTNVLSKHRRIPL) form a B box-type zinc finger. The segment at 369-539 (ESRVVLLGLD…LSRLNGTCPV (171 aa)) is ARF-like. GTP-binding positions include 376 to 383 (GLDGAGKT), 422 to 426 (DVGGL), and 481 to 484 (NRKD).

It in the C-terminal section; belongs to the small GTPase superfamily. Arf family.

The enzyme catalyses S-ubiquitinyl-[E2 ubiquitin-conjugating enzyme]-L-cysteine + [acceptor protein]-L-lysine = [E2 ubiquitin-conjugating enzyme]-L-cysteine + N(6)-ubiquitinyl-[acceptor protein]-L-lysine.. It functions in the pathway protein modification; protein ubiquitination. In terms of biological role, acts as an E3 ubiquitin-protein ligase. This chain is E3 ubiquitin-protein ligase arc-1 (arc-1), found in Caenorhabditis elegans.